A 1896-amino-acid polypeptide reads, in one-letter code: Plexin-A1 (1896 aa).

An N-terminal signal peptide occupies residues 1 to 26; the sequence is MPLPPRSLQVLLLLLLLLLLLPGMWA. In terms of domain architecture, Sema spans 27–512; it reads EAGLPRAGGG…TEKQVTRVPV (486 aa). Topologically, residues 27–1244 are extracellular; the sequence is EAGLPRAGGG…VYSDSLLTLP (1218 aa). The N-linked (GlcNAc...) asparagine glycan is linked to asparagine 77. Cystine bridges form between cysteine 95-cysteine 104, cysteine 130-cysteine 138, cysteine 286-cysteine 407, cysteine 302-cysteine 358, cysteine 376-cysteine 395, cysteine 515-cysteine 532, cysteine 521-cysteine 563, cysteine 524-cysteine 541, cysteine 535-cysteine 547, and cysteine 598-cysteine 617. Residues asparagine 660, asparagine 672, and asparagine 701 are each glycosylated (N-linked (GlcNAc...) asparagine). 4 IPT/TIG domains span residues 864-959, 961-1045, 1048-1147, and 1150-1236; these read PKIL…FTFV, PTFY…YNYT, PTIL…FLYY, and PVLE…LQVY. Residue asparagine 1043 is glycosylated (N-linked (GlcNAc...) asparagine). Residues asparagine 1187 and asparagine 1212 are each glycosylated (N-linked (GlcNAc...) asparagine). Residues 1245 to 1265 traverse the membrane as a helical segment; that stretch reads AIVGIGGGGGLLLLVIVAVLI. The stretch at 1264-1317 forms a coiled coil; that stretch reads LIAYKRKSRDADRTLKRLQLQMDNLESRVALECKEAFAELQTDIHELTNDLDGA. At 1266 to 1896 the chain is on the cytoplasmic side; the sequence is AYKRKSRDAD…QVVDTMALSS (631 aa).

It belongs to the plexin family. In terms of assembly, interacts directly with NRP1 and NRP2. Interacts with PLXN1B. Interacts with FARP2, RND1 and KDR/VEGFR2. Binding of SEMA3A leads to dissociation of FARP2. Interacts with CRMP1, DPYSL2/CRMP2, DPYSL3/CRMP3 and DPYSL4/CRMP4. Interacts (via TIG domains) with TREM2; the interaction mediates SEMA6D binding and signaling through TYROBP. Detected in fetal brain, lung, liver and kidney.

It localises to the cell membrane. Functionally, coreceptor for SEMA3A, SEMA3C, SEMA3F and SEMA6D. Necessary for signaling by class 3 semaphorins and subsequent remodeling of the cytoskeleton. Plays a role in axon guidance, invasive growth and cell migration. Class 3 semaphorins bind to a complex composed of a neuropilin and a plexin. The plexin modulates the affinity of the complex for specific semaphorins, and its cytoplasmic domain is required for the activation of down-stream signaling events in the cytoplasm. Acts as coreceptor of TREM2 for SEMA6D in dendritic cells and is involved in the generation of immune responses and skeletal homeostasis. This chain is Plexin-A1, found in Homo sapiens (Human).